The primary structure comprises 207 residues: Small ribosomal subunit protein uS4c (207 aa).

The disordered stretch occupies residues 22-51; sequence TQKNCTRDFPPGQHGPKKKGGGNQKTKESQ. An S4 RNA-binding domain is found at 97 to 158; sequence MRLDTIIFRL…NSQNFVKNLL (62 aa).

It belongs to the universal ribosomal protein uS4 family. Part of the 30S ribosomal subunit. Contacts protein S5. The interaction surface between S4 and S5 is involved in control of translational fidelity.

It localises to the plastid. Its subcellular location is the chloroplast. Its function is as follows. One of the primary rRNA binding proteins, it binds directly to 16S rRNA where it nucleates assembly of the body of the 30S subunit. With S5 and S12 plays an important role in translational accuracy. This chain is Small ribosomal subunit protein uS4c (rps4), found in Chlorella vulgaris (Green alga).